Reading from the N-terminus, the 127-residue chain is Major sperm protein 49 (127 aa).

Ala2 carries the N-acetylalanine modification. An MSP domain is found at 9–126 (DIQTQPGTKI…RRKNLPIEYN (118 aa)).

Sperm.

It is found in the cell projection. It localises to the pseudopodium. The protein localises to the cytoplasm. The protein resides in the cytoskeleton. Its function is as follows. Central component in molecular interactions underlying sperm crawling. Forms an extensive filament system that extends from sperm villipoda, along the leading edge of the pseudopod. This chain is Major sperm protein 49 (msp-49), found in Caenorhabditis elegans.